Consider the following 334-residue polypeptide: MHNTDVIIIGAGPVGLFTIFQAGMLGMKCHVIDAQETVGGQCITLYPEKPIYDIPAYPKIAAEELIKQLEFQAAPFKPVYHLNQHATDLNKQGDFFEIRTSKNTIIKSKAIIIAAGAGSFGPNKPPLANIEDFEGKSVFYFINNKSKFAGKNIVIAGGGDSAVDWAISLSEIANKIYLVHRRDKFTAAPESVRQLRDIAETGKIELVTGYQLNALDGNNGTLQTVIVKDLQNNIRKLDANVLLPFFGLKQDLGSLANWGLDVKLHHIEVDNSYYQTNIEGIYAIGDIAHYAGKLKLILTGFAEAASSIHHAYIRVFNGQALHFEYSTTKYGERK.

Residues Asp33, Gln41, Tyr46, Ala86, Phe120, Asp286, and Thr327 each coordinate FAD.

It belongs to the ferredoxin--NADP reductase type 2 family. In terms of assembly, homodimer. FAD is required as a cofactor.

It catalyses the reaction 2 reduced [2Fe-2S]-[ferredoxin] + NADP(+) + H(+) = 2 oxidized [2Fe-2S]-[ferredoxin] + NADPH. This is Ferredoxin--NADP reductase from Rickettsia akari (strain Hartford).